A 294-amino-acid chain; its full sequence is uncharacterized protein (294 aa).

Active-site charge relay system residues include Thr43 and Tyr104. The Proton donor role is filled by Tyr130. The active-site Schiff-base intermediate with substrate is the Lys158.

Belongs to the DapA family. Homotetramer.

It localises to the cytoplasm. This is an uncharacterized protein from Pyrococcus abyssi (strain GE5 / Orsay).